The following is a 269-amino-acid chain: Glutamate 5-kinase 2 (269 aa).

Lys-16 is a binding site for ATP. Residues Ser-57, Asp-144, and Asn-156 each coordinate substrate. Ser-218–Lys-224 provides a ligand contact to ATP.

The protein belongs to the glutamate 5-kinase family.

The protein resides in the cytoplasm. It carries out the reaction L-glutamate + ATP = L-glutamyl 5-phosphate + ADP. The protein operates within amino-acid biosynthesis; L-proline biosynthesis; L-glutamate 5-semialdehyde from L-glutamate: step 1/2. In terms of biological role, catalyzes the transfer of a phosphate group to glutamate to form L-glutamate 5-phosphate. The polypeptide is Glutamate 5-kinase 2 (Rhizobium meliloti (strain 1021) (Ensifer meliloti)).